The primary structure comprises 425 residues: Interferon regulatory factor 8 (425 aa).

The IRF tryptophan pentad repeat DNA-binding region spans 7 to 114 (GRRLRQWLIE…EPYKVYRIVP (108 aa)).

It belongs to the IRF family.

The protein localises to the nucleus. It localises to the cytoplasm. In terms of biological role, plays a role as a transcriptional activator or repressor. Specifically binds to the upstream regulatory region of type I IFN and IFN-inducible MHC class I genes (the interferon consensus sequence (ICS)). Plays a regulatory role in cells of the immune system. The polypeptide is Interferon regulatory factor 8 (IRF8) (Gallus gallus (Chicken)).